The following is a 215-amino-acid chain: UPF0502 protein YceH (215 aa).

At K80 the chain carries N6-acetyllysine.

Belongs to the UPF0502 family.

This Escherichia coli O7:K1 (strain IAI39 / ExPEC) protein is UPF0502 protein YceH.